We begin with the raw amino-acid sequence, 178 residues long: Sec-independent protein translocase protein TatB (178 aa).

A helical membrane pass occupies residues 1-21 (MFDIGWSELLVIGVVALIAIG). The disordered stretch occupies residues 146-178 (LAIVREIKPEPQPQPADGAAPAEPERLKDAKAS). Residues 168-178 (EPERLKDAKAS) are compositionally biased toward basic and acidic residues.

It belongs to the TatB family. As to quaternary structure, the Tat system comprises two distinct complexes: a TatABC complex, containing multiple copies of TatA, TatB and TatC subunits, and a separate TatA complex, containing only TatA subunits. Substrates initially bind to the TatABC complex, which probably triggers association of the separate TatA complex to form the active translocon.

The protein localises to the cell inner membrane. In terms of biological role, part of the twin-arginine translocation (Tat) system that transports large folded proteins containing a characteristic twin-arginine motif in their signal peptide across membranes. Together with TatC, TatB is part of a receptor directly interacting with Tat signal peptides. TatB may form an oligomeric binding site that transiently accommodates folded Tat precursor proteins before their translocation. This is Sec-independent protein translocase protein TatB from Bradyrhizobium sp. (strain ORS 278).